The primary structure comprises 199 residues: FMN-dependent NADH:quinone oxidoreductase (199 aa).

Residues serine 10, 16 to 18, and 96 to 99 each bind FMN; these read SVS and MYNF.

This sequence belongs to the azoreductase type 1 family. Homodimer. FMN is required as a cofactor.

The enzyme catalyses 2 a quinone + NADH + H(+) = 2 a 1,4-benzosemiquinone + NAD(+). It catalyses the reaction N,N-dimethyl-1,4-phenylenediamine + anthranilate + 2 NAD(+) = 2-(4-dimethylaminophenyl)diazenylbenzoate + 2 NADH + 2 H(+). Functionally, quinone reductase that provides resistance to thiol-specific stress caused by electrophilic quinones. Also exhibits azoreductase activity. Catalyzes the reductive cleavage of the azo bond in aromatic azo compounds to the corresponding amines. In Azotobacter vinelandii (strain DJ / ATCC BAA-1303), this protein is FMN-dependent NADH:quinone oxidoreductase.